The primary structure comprises 126 residues: C-type natriuretic peptide (126 aa).

A signal peptide spans 1 to 23; the sequence is MHLSQLIACALLLALLSLRPSEA. The segment at 19–71 is disordered; the sequence is RPSEAKPGTPPKVPRTPPGEELAEPQAAGGNQKKGDKTPGGGGANLKGDRSRL. Residues 24-73 constitute a propeptide that is removed on maturation; the sequence is KPGTPPKVPRTPPGEELAEPQAAGGNQKKGDKTPGGGGANLKGDRSRLLR. The span at 26–35 shows a compositional bias: pro residues; sequence GTPPKVPRTP. An intrachain disulfide couples cysteine 110 to cysteine 126.

It belongs to the natriuretic peptide family. In terms of processing, degraded by IDE (in vitro). Expressed exclusively in brain.

The protein localises to the secreted. Functionally, hormone which plays a role in endochondral ossification through regulation of cartilaginous growth plate chondrocytes proliferation and differentiation. May also be vasoactive and natriuretic. Acts by specifically binding and stimulating NPR2 to produce cGMP. Binds the clearance receptor NPR3. The protein is C-type natriuretic peptide (Nppc) of Rattus norvegicus (Rat).